The sequence spans 572 residues: Urease subunit alpha (572 aa).

The 439-residue stretch at 134-572 (AGIDSHIHLI…ASMNQRYFFG (439 aa)) folds into the Urease domain. The Ni(2+) site is built by His139, His141, and Lys222. Lys222 is modified (N6-carboxylysine). His224 lines the substrate pocket. Ni(2+) contacts are provided by His251 and His277. His325 acts as the Proton donor in catalysis. Asp365 lines the Ni(2+) pocket.

It belongs to the metallo-dependent hydrolases superfamily. Urease alpha subunit family. As to quaternary structure, heterotrimer of UreA (gamma), UreB (beta) and UreC (alpha) subunits. Three heterotrimers associate to form the active enzyme. It depends on Ni cation as a cofactor. Carboxylation allows a single lysine to coordinate two nickel ions.

The protein resides in the cytoplasm. The enzyme catalyses urea + 2 H2O + H(+) = hydrogencarbonate + 2 NH4(+). The protein operates within nitrogen metabolism; urea degradation; CO(2) and NH(3) from urea (urease route): step 1/1. The sequence is that of Urease subunit alpha from Yersinia pseudotuberculosis serotype O:1b (strain IP 31758).